A 55-amino-acid polypeptide reads, in one-letter code: MAKPASIKIRLNSTADTGFFYVTKKNARTKTEKMVLKKYDPVIRKHVEFREGKIK.

The protein belongs to the bacterial ribosomal protein bL33 family.

The sequence is that of Large ribosomal subunit protein bL33 from Caulobacter vibrioides (strain ATCC 19089 / CIP 103742 / CB 15) (Caulobacter crescentus).